The following is a 294-amino-acid chain: Cytidine deaminase (294 aa).

CMP/dCMP-type deaminase domains follow at residues 48 to 168 (DEDA…FGPK) and 186 to 294 (LTGD…VLLG). 89–91 (NME) contributes to the substrate binding site. His102 contributes to the Zn(2+) binding site. Glu104 (proton donor) is an active-site residue. Positions 129 and 132 each coordinate Zn(2+).

This sequence belongs to the cytidine and deoxycytidylate deaminase family. As to quaternary structure, homodimer. It depends on Zn(2+) as a cofactor.

The catalysed reaction is cytidine + H2O + H(+) = uridine + NH4(+). The enzyme catalyses 2'-deoxycytidine + H2O + H(+) = 2'-deoxyuridine + NH4(+). This enzyme scavenges exogenous and endogenous cytidine and 2'-deoxycytidine for UMP synthesis. The chain is Cytidine deaminase from Salmonella newport (strain SL254).